A 358-amino-acid chain; its full sequence is Isopentenyl-diphosphate delta-isomerase (358 aa).

12-13 (RK) is a substrate binding site. FMN-binding positions include 69–71 (AMT), S99, and N128. Q158 provides a ligand contact to substrate. Position 159 (E159) interacts with Mg(2+). FMN contacts are provided by residues K190, T220, 267 to 269 (GIR), and 288 to 289 (AG).

This sequence belongs to the IPP isomerase type 2 family. Homooctamer. Dimer of tetramers. Requires FMN as cofactor. It depends on NADPH as a cofactor. The cofactor is Mg(2+).

The protein resides in the cytoplasm. The catalysed reaction is isopentenyl diphosphate = dimethylallyl diphosphate. In terms of biological role, involved in the biosynthesis of isoprenoids. Catalyzes the 1,3-allylic rearrangement of the homoallylic substrate isopentenyl (IPP) to its allylic isomer, dimethylallyl diphosphate (DMAPP). In Listeria welshimeri serovar 6b (strain ATCC 35897 / DSM 20650 / CCUG 15529 / CIP 8149 / NCTC 11857 / SLCC 5334 / V8), this protein is Isopentenyl-diphosphate delta-isomerase.